Here is a 702-residue protein sequence, read N- to C-terminus: Polyribonucleotide nucleotidyltransferase (702 aa).

Residues Asp485 and Asp491 each coordinate Mg(2+). One can recognise a KH domain in the interval 552-612 (PRTEIICIDP…EGVKKAISII (61 aa)). The 69-residue stretch at 622 to 690 (GEIYLGKVTK…NQGRINLSRK (69 aa)) folds into the S1 motif domain.

It belongs to the polyribonucleotide nucleotidyltransferase family. Mg(2+) is required as a cofactor.

It localises to the cytoplasm. It carries out the reaction RNA(n+1) + phosphate = RNA(n) + a ribonucleoside 5'-diphosphate. Its function is as follows. Involved in mRNA degradation. Catalyzes the phosphorolysis of single-stranded polyribonucleotides processively in the 3'- to 5'-direction. In Clostridium botulinum (strain Loch Maree / Type A3), this protein is Polyribonucleotide nucleotidyltransferase.